The sequence spans 274 residues: MSLQETIIQELGVKPVIDAQEEIRRSIDFLKRYLKKHPFLKTFVLGISGGQDSTLAGRLAQLAMEELRAETGDDSYKFIAVRLPYGVQADEADAQKALAFIQPDVSLVVNIKESVDAMTAAVEATGSPVSDFNKGNIKARCRMIAQYALAGSHSGAVIGTDHAAENITGFFTKFGDGGADILPLYRLNKRQGKQLLQKLGAEPALYEKIPTADLEEDKPGLADEVALGVTYAEIDDYLEGKTISPEAQATIENWWHKGQHKRRLPITVFDDFWE.

46–53 (GISGGQDS) is a binding site for ATP. Asp-52 contributes to the Mg(2+) binding site. A deamido-NAD(+)-binding site is contributed by Arg-140. An ATP-binding site is contributed by Thr-160. Residue Glu-165 coordinates Mg(2+). Positions 173 and 180 each coordinate deamido-NAD(+). 2 residues coordinate ATP: Lys-189 and Thr-211. A deamido-NAD(+)-binding site is contributed by 260 to 261 (HK).

It belongs to the NAD synthetase family. As to quaternary structure, homodimer.

The catalysed reaction is deamido-NAD(+) + NH4(+) + ATP = AMP + diphosphate + NAD(+) + H(+). It participates in cofactor biosynthesis; NAD(+) biosynthesis; NAD(+) from deamido-NAD(+) (ammonia route): step 1/1. Its function is as follows. Catalyzes the ATP-dependent amidation of deamido-NAD to form NAD. Uses ammonia as a nitrogen source. This is NH(3)-dependent NAD(+) synthetase from Streptococcus pneumoniae (strain Hungary19A-6).